Reading from the N-terminus, the 155-residue chain is uncharacterized protein (155 aa).

A signal peptide spans 1–30; it reads MTYNTNTSLSSYAGLSAFALSVFCILWGTA.

This is an uncharacterized protein from Treponema pallidum (strain Nichols).